Reading from the N-terminus, the 126-residue chain is Protein ApaG (126 aa).

The region spanning 2-126 is the ApaG domain; it reads SFPIDSIKIK…FRLAMPGVMQ (125 aa).

The polypeptide is Protein ApaG (Shewanella denitrificans (strain OS217 / ATCC BAA-1090 / DSM 15013)).